The sequence spans 274 residues: Ribosomal RNA small subunit methyltransferase A (274 aa).

S-adenosyl-L-methionine-binding residues include Asn17, Leu19, Gly44, Glu65, Asp89, and Asn111.

This sequence belongs to the class I-like SAM-binding methyltransferase superfamily. rRNA adenine N(6)-methyltransferase family. RsmA subfamily.

The protein localises to the cytoplasm. It catalyses the reaction adenosine(1518)/adenosine(1519) in 16S rRNA + 4 S-adenosyl-L-methionine = N(6)-dimethyladenosine(1518)/N(6)-dimethyladenosine(1519) in 16S rRNA + 4 S-adenosyl-L-homocysteine + 4 H(+). Functionally, specifically dimethylates two adjacent adenosines (A1518 and A1519) in the loop of a conserved hairpin near the 3'-end of 16S rRNA in the 30S particle. May play a critical role in biogenesis of 30S subunits. This is Ribosomal RNA small subunit methyltransferase A from Buchnera aphidicola subsp. Schizaphis graminum (strain Sg).